The sequence spans 518 residues: Putative cysteine ligase BshC (518 aa).

Positions 404–474 (AAASAERLAA…RARQLTRLKR (71 aa)) form a coiled coil.

It belongs to the BshC family.

In Deinococcus geothermalis (strain DSM 11300 / CIP 105573 / AG-3a), this protein is Putative cysteine ligase BshC.